Reading from the N-terminus, the 156-residue chain is Regulatory protein RecX (156 aa).

The protein belongs to the RecX family.

The protein localises to the cytoplasm. In terms of biological role, modulates RecA activity. The polypeptide is Regulatory protein RecX (Pseudomonas putida (strain GB-1)).